Here is a 312-residue protein sequence, read N- to C-terminus: Aspartate carbamoyltransferase catalytic subunit (312 aa).

2 residues coordinate carbamoyl phosphate: Arg-58 and Thr-59. Lys-86 lines the L-aspartate pocket. Residues Arg-108, His-136, and Gln-139 each contribute to the carbamoyl phosphate site. Residues Arg-169 and Arg-223 each coordinate L-aspartate. 2 residues coordinate carbamoyl phosphate: Gly-264 and Pro-265.

This sequence belongs to the aspartate/ornithine carbamoyltransferase superfamily. ATCase family. Heterododecamer (2C3:3R2) of six catalytic PyrB chains organized as two trimers (C3), and six regulatory PyrI chains organized as three dimers (R2).

The catalysed reaction is carbamoyl phosphate + L-aspartate = N-carbamoyl-L-aspartate + phosphate + H(+). The protein operates within pyrimidine metabolism; UMP biosynthesis via de novo pathway; (S)-dihydroorotate from bicarbonate: step 2/3. In terms of biological role, catalyzes the condensation of carbamoyl phosphate and aspartate to form carbamoyl aspartate and inorganic phosphate, the committed step in the de novo pyrimidine nucleotide biosynthesis pathway. In Desulforamulus reducens (strain ATCC BAA-1160 / DSM 100696 / MI-1) (Desulfotomaculum reducens), this protein is Aspartate carbamoyltransferase catalytic subunit.